The chain runs to 228 residues: Cutinase (228 aa).

An N-terminal signal peptide occupies residues 1–16; that stretch reads MKFLSIISLAVSLVAA. A disulfide bond links Cys49 and Cys129. Residue Ser140 is the Nucleophile of the active site. The cysteines at positions 191 and 198 are disulfide-linked. The active site involves Asp195. His208 serves as the catalytic Proton donor/acceptor.

Belongs to the cutinase family. Post-translationally, the 2 disulfide bonds play a critical role in holding the catalytic residues in juxta-position; reduction of the disulfide bridges results in the complete inactivation of the enzyme.

The protein localises to the secreted. The catalysed reaction is cutin + H2O = cutin monomers.. With respect to regulation, partially inhibited by berberine; higher inhibitory effects are observed with longer chain polyester substrates. Its function is as follows. Catalyzes the hydrolysis of complex carboxylic polyesters found in the cell wall of plants. Degrades cutin, a macromolecule that forms the structure of the plant cuticle. Allows pathogenic fungi to penetrate through the cuticular barrier into the host plant during the initial stage of fungal infection. The protein is Cutinase (CUTA) of Colletotrichum truncatum (Anthracnose fungus).